The sequence spans 307 residues: Protein FAM76A (307 aa).

Disordered regions lie at residues 161-181 and 287-307; these read SRLSSGSHYNSQKTLSTSSIQ and KQAAALSKGKKPEKSGAITSP. The stretch at 217-297 forms a coiled coil; that stretch reads IIAQLKEEVA…QAAALSKGKK (81 aa).

Belongs to the FAM76 family.

In Gallus gallus (Chicken), this protein is Protein FAM76A (FAM76A).